A 951-amino-acid chain; its full sequence is Glycine dehydrogenase (decarboxylating) 1 (951 aa).

N6-(pyridoxal phosphate)lysine is present on K703.

Belongs to the GcvP family. In terms of assembly, the glycine cleavage system is composed of four proteins: P, T, L and H. Pyridoxal 5'-phosphate is required as a cofactor.

The enzyme catalyses N(6)-[(R)-lipoyl]-L-lysyl-[glycine-cleavage complex H protein] + glycine + H(+) = N(6)-[(R)-S(8)-aminomethyldihydrolipoyl]-L-lysyl-[glycine-cleavage complex H protein] + CO2. Functionally, the glycine cleavage system catalyzes the degradation of glycine. The P protein binds the alpha-amino group of glycine through its pyridoxal phosphate cofactor; CO(2) is released and the remaining methylamine moiety is then transferred to the lipoamide cofactor of the H protein. The polypeptide is Glycine dehydrogenase (decarboxylating) 1 (Pseudomonas fluorescens (strain ATCC BAA-477 / NRRL B-23932 / Pf-5)).